Consider the following 369-residue polypeptide: Delta(6)-protoilludene synthase STEHIDRAFT_73029 (369 aa).

Positions 107, 243, 247, and 251 each coordinate Mg(2+). The D(D/E)XX(D/E) motif motif lies at 107–111 (DEYSD). The NSE motif signature appears at 243-251 (NDIVSYNLE). (2E,6E)-farnesyl diphosphate contacts are provided by R333 and Y334.

It belongs to the terpene synthase family. Requires Mg(2+) as cofactor. Mn(2+) is required as a cofactor. It depends on Ca(2+) as a cofactor. Ni(2+) serves as cofactor. The cofactor is Co(2+).

It carries out the reaction (2E,6E)-farnesyl diphosphate = Delta(6)-protoilludene + diphosphate. The enzyme catalyses (2E,6E)-farnesyl diphosphate = alpha-selinene + diphosphate. With respect to regulation, ca(2+) switches the cyclization mechanism of delta(6)-protoilludene synthase from 1,11 to 1,10 cyclization which leads to the production of beta-elemene. Terpene cyclase that catalyzes the cyclization of farnesyl diphosphate (FPP) to delta(6)-protoilludene. In presence of Ca(2+), a significant switch from 1,11 to a dual 1,11/1,10 cyclization occurs, producing beta-elemene as the major product, with lower levels of delta(6)-protoilludene and (E)-beta-caryophyllene, and traces of beta-selinene and alpha-selinene. The sequence is that of Delta(6)-protoilludene synthase STEHIDRAFT_73029 from Stereum hirsutum (strain FP-91666) (White-rot fungus).